A 172-amino-acid chain; its full sequence is Lectin (172 aa).

The first 20 residues, Met-1 to Gly-20, serve as a signal peptide directing secretion. The region spanning Asp-36–Tyr-172 is the C-type lectin domain. 2 disulfide bridges follow: Cys-65–Cys-164 and Cys-140–Cys-156. An N-linked (GlcNAc...) asparagine glycan is attached at Asn-93.

As to quaternary structure, heterodimer. As to expression, anterior part of oviduct.

Its subcellular location is the secreted. Its function is as follows. May be involved in protection of eggs and embryos against microorganisms. Calcium-dependent lectin with specificity to D-glucose and D-glucosamine. Can agglutinate microorganisms in vivo. In Pleurodeles waltl (Iberian ribbed newt), this protein is Lectin (LEC).